Consider the following 1905-residue polypeptide: Tudor domain-containing 6-like (1905 aa).

Tudor domains lie at 1–30 (MVEV…LREM), 215–279 (YERG…LFDL), and 435–491 (SVTP…AYEL). The segment at 564 to 795 (SRAEGSFGNS…SKLTPPLSKL (232 aa)) is disordered. Residues 573-591 (SEKRNQLNDLDRGGRKETT) are compositionally biased toward basic and acidic residues. Residues 592–602 (SKFQPYSQGSK) show a composition bias toward polar residues. The span at 622-631 (FQTKEREQFE) shows a compositional bias: basic and acidic residues. Composition is skewed to polar residues over residues 651-660 (VQKNMSQSGF) and 687-704 (LYSQ…SSYS). The segment covering 715–726 (RSKERQVSEHKQ) has biased composition (basic and acidic residues). Polar residues-rich tracts occupy residues 746–766 (KASQ…GSDQ) and 774–787 (NASQ…QESK). Tudor domains are found at residues 853 to 910 (YVNL…LLSI) and 1060 to 1118 (EIEV…IAAI). Disordered stretches follow at residues 1213–1245 (IEDN…TPAV), 1449–1599 (EDFE…TETE), 1655–1682 (VEDL…SGPV), and 1827–1905 (ESPA…APSV). 2 stretches are compositionally biased toward acidic residues: residues 1491–1500 (EAEGLEDQDQ) and 1522–1535 (EQAE…DPGT). Basic and acidic residues predominate over residues 1553-1588 (SQEHKDFPEQEEDRVAEHKNDISEPDLQSKEQKEDL). Residues 1663–1673 (QESQICISGSD) are compositionally biased toward polar residues. Residues 1876–1887 (FEPETDDMEQME) are compositionally biased toward acidic residues.

In terms of assembly, interacts with FRGY2 (a component of messenger ribonucleoprotein (mRNP) particle) during germ cell development. As to expression, expressed in testis.

It localises to the cytoplasm. Tudor domain-containing protein involved in germ cell development, more specifically the formation of chromatoid body (during spermiogenesis), Balbiani body (during oogenesis), germ plasm (upon fertilization), and for proper miRNA expression and spliceosome maturation. Component of cytoplasmic mRNP particle through interaction with FRGY2, and binds to maternal mRNA related to cell cycle (RCC1, RHAMM, INCENP-A, MAD2L1, HELLS) and a germ plasm specific mRNA (Dead end/Dnd1), it is proposed a role in translational activation of the maternal mRNAs repressed in mRNP particle. The protein is Tudor domain-containing 6-like of Xenopus laevis (African clawed frog).